A 381-amino-acid chain; its full sequence is GDP-mannose transporter (381 aa).

Over 1–40 (MADDKKTNDYTVEMDKLDQGSKNFEAPLPPVQPRSAPNAQ) the chain is Cytoplasmic. Residues 41–61 (LANNPILPVLAYCGSSIMMTV) form a helical membrane-spanning segment. Residues 62–71 (MNKYVLSGTD) lie on the Lumenal side of the membrane. A helical transmembrane segment spans residues 72-92 (FNLNFLLLCVQSIVCIVAIQT). Residues 93 to 110 (CKASKLITYRDFNADEAK) are Cytoplasmic-facing. Residues 111-127 (KWFPITLLLIGMIYTGS) form a helical membrane-spanning segment. Residues 128–134 (KALQFLS) lie on the Lumenal side of the membrane. Residues 135-151 (IPVYTIFKNLTIILIAY) traverse the membrane as a helical segment. Residues 152 to 160 (GEVLWFGGS) lie on the Cytoplasmic side of the membrane. Residues 161-182 (VTGLTLFSFGLMVLSSIIAAWA) traverse the membrane as a helical segment. Residues 183–200 (DIKHAVESSGDATAKVST) are Lumenal-facing. The chain crosses the membrane as a helical span at residues 201-221 (LNAGYIWMLINCLCTSSYVLG). The Cytoplasmic portion of the chain corresponds to 222 to 233 (MRKRIKLTNFKD). The chain crosses the membrane as a helical span at residues 234–254 (FDTMFYNNLLSIPVLLVLTFL). Topologically, residues 255 to 274 (MEDWSSANITRNFPPADRNG) are lumenal. Asparagine 262 is a glycosylation site (N-linked (GlcNAc...) asparagine). Residues 275–295 (IMFAMILSGLSSVFISYTSAW) form a helical membrane-spanning segment. Over 296-303 (CVRVTSST) the chain is Cytoplasmic. Residues 304–324 (TYSMVGALNKLPIAVSGLIFF) form a helical membrane-spanning segment. Residues 325 to 327 (DAP) lie on the Lumenal side of the membrane. Residues 328 to 348 (VTFPSVSAIVVGFVSGIVYAV) form a helical membrane-spanning segment. Residues 349–381 (AKIKQNAKPKTGVLPTSNPVSASSQSMRDSLRS) are Cytoplasmic-facing. The tract at residues 362–381 (LPTSNPVSASSQSMRDSLRS) is disordered.

It belongs to the TPT transporter family. SLC35D subfamily. As to quaternary structure, homooligomer.

It localises to the golgi apparatus membrane. The protein resides in the cytoplasmic vesicle membrane. The protein localises to the endoplasmic reticulum membrane. Involved in the import of GDP-mannose from the cytoplasm into the Golgi lumen. This Aspergillus clavatus (strain ATCC 1007 / CBS 513.65 / DSM 816 / NCTC 3887 / NRRL 1 / QM 1276 / 107) protein is GDP-mannose transporter (gmt1).